Consider the following 244-residue polypeptide: tRNA pseudouridine synthase A (244 aa).

The Nucleophile role is filled by Asp52. Substrate is bound at residue Tyr111.

The protein belongs to the tRNA pseudouridine synthase TruA family. In terms of assembly, homodimer.

It catalyses the reaction uridine(38/39/40) in tRNA = pseudouridine(38/39/40) in tRNA. Its function is as follows. Formation of pseudouridine at positions 38, 39 and 40 in the anticodon stem and loop of transfer RNAs. This is tRNA pseudouridine synthase A from Thermosipho melanesiensis (strain DSM 12029 / CIP 104789 / BI429).